Here is a 206-residue protein sequence, read N- to C-terminus: RNA pyrophosphohydrolase (206 aa).

The Nudix hydrolase domain occupies 6–150; sequence GYRPNVGIVI…KRDVYRKVMK (145 aa). A Nudix box motif is present at residues 38-59; sequence GGINEGENIETAMYRELYEEVG. The segment covering 162-191 has biased composition (basic and acidic residues); sequence KPETVEKPRVERTEKRDFQKRDNQKREFRK. The interval 162–206 is disordered; that stretch reads KPETVEKPRVERTEKRDFQKRDNQKREFRKSARMWNNSHQKGKAQ.

The protein belongs to the Nudix hydrolase family. RppH subfamily. Requires a divalent metal cation as cofactor.

Functionally, accelerates the degradation of transcripts by removing pyrophosphate from the 5'-end of triphosphorylated RNA, leading to a more labile monophosphorylated state that can stimulate subsequent ribonuclease cleavage. In Actinobacillus pleuropneumoniae serotype 5b (strain L20), this protein is RNA pyrophosphohydrolase.